A 622-amino-acid chain; its full sequence is Chaperone protein HscA homolog (622 aa).

This sequence belongs to the heat shock protein 70 family.

Functionally, chaperone involved in the maturation of iron-sulfur cluster-containing proteins. Has a low intrinsic ATPase activity which is markedly stimulated by HscB. This Burkholderia pseudomallei (strain 1710b) protein is Chaperone protein HscA homolog.